The sequence spans 145 residues: 3-dehydroquinate dehydratase (145 aa).

Tyr24 functions as the Proton acceptor in the catalytic mechanism. 3 residues coordinate substrate: Asn75, His81, and Asp88. The active-site Proton donor is the His101. Residues 102–103 and Arg112 contribute to the substrate site; that span reads IS.

The protein belongs to the type-II 3-dehydroquinase family. In terms of assembly, homododecamer.

It carries out the reaction 3-dehydroquinate = 3-dehydroshikimate + H2O. It functions in the pathway metabolic intermediate biosynthesis; chorismate biosynthesis; chorismate from D-erythrose 4-phosphate and phosphoenolpyruvate: step 3/7. Its function is as follows. Catalyzes a trans-dehydration via an enolate intermediate. The polypeptide is 3-dehydroquinate dehydratase (Corynebacterium glutamicum (strain R)).